The sequence spans 104 residues: Large ribosomal subunit protein uL24 (104 aa).

This sequence belongs to the universal ribosomal protein uL24 family. As to quaternary structure, part of the 50S ribosomal subunit.

One of two assembly initiator proteins, it binds directly to the 5'-end of the 23S rRNA, where it nucleates assembly of the 50S subunit. Its function is as follows. One of the proteins that surrounds the polypeptide exit tunnel on the outside of the subunit. The chain is Large ribosomal subunit protein uL24 from Shewanella sediminis (strain HAW-EB3).